Consider the following 200-residue polypeptide: Regulator of G-protein signaling 16 (200 aa).

2 S-palmitoyl cysteine lipidation sites follow: Cys2 and Cys12. The RGS domain maps to 65 to 181 (SFDLLLSSKN…LKSPAYRDLA (117 aa)). Phosphotyrosine is present on residues Tyr168 and Tyr177.

As to quaternary structure, interacts with GNAI1 and GNAQ. Interacts with GNAI3, GNAI3 and GNAO1. (Microbial infection) Interacts with porcine circovirus 2 ORF3 protein. Palmitoylated on Cys-2 and/or Cys-12. In terms of processing, phosphorylated. Phosphorylation at Tyr-168 by EGFR enhances GTPase accelerating (GAP) activity toward GNAI1.

It is found in the membrane. In terms of biological role, regulates G protein-coupled receptor signaling cascades. Inhibits signal transduction by increasing the GTPase activity of G protein alpha subunits, thereby driving them into their inactive GDP-bound form. Plays an important role in the phototransduction cascade by regulating the lifetime and effective concentration of activated transducin alpha. May regulate extra and intracellular mitogenic signals. (Microbial infection) Gets inactivated and/or degraded by porcine circovirus 2 ORF3 protein, leading to enhanced expression of IL-6 and IL-8 in infected lymphocytes. This would explain chronic inflammatory response of PCV2 infected pigs. The chain is Regulator of G-protein signaling 16 (RGS16) from Sus scrofa (Pig).